The sequence spans 283 residues: Cyclin-C (283 aa).

One can recognise a Cyclin N-terminal domain in the interval 20–151; sequence DLLKERQKDL…LLELMDCCLI (132 aa). The segment at 252–283 is disordered; it reads TILSKMPKPKPPPNSEGEQGPNGSQNSSYSQS. Over residues 272 to 283 the composition is skewed to polar residues; it reads PNGSQNSSYSQS. Serine 275 carries the phosphoserine modification.

This sequence belongs to the cyclin family. Cyclin C subfamily. In terms of assembly, component of the Mediator complex, which is composed of MED1, MED4, MED6, MED7, MED8, MED9, MED10, MED11, MED12, MED13, MED13L, MED14, MED15, MED16, MED17, MED18, MED19, MED20, MED21, MED22, MED23, MED24, MED25, MED26, MED27, MED29, MED30, MED31, CCNC, CDK8 and CDC2L6/CDK11. The MED12, MED13, CCNC and CDK8 subunits form a distinct module termed the CDK8 module. Mediator containing the CDK8 module is less active than Mediator lacking this module in supporting transcriptional activation. Individual preparations of the Mediator complex lacking one or more distinct subunits have been variously termed ARC, CRSP, DRIP, PC2, SMCC and TRAP. The cylin/CDK pair formed by CCNC/CDK8 also associates with the large subunit of RNA polymerase II.

It localises to the nucleus. Functionally, component of the Mediator complex, a coactivator involved in regulated gene transcription of nearly all RNA polymerase II-dependent genes. Mediator functions as a bridge to convey information from gene-specific regulatory proteins to the basal RNA polymerase II transcription machinery. Mediator is recruited to promoters by direct interactions with regulatory proteins and serves as a scaffold for the assembly of a functional preinitiation complex with RNA polymerase II and the general transcription factors. Binds to and activates cyclin-dependent kinase CDK8 that phosphorylates the CTD (C-terminal domain) of the large subunit of RNA polymerase II (RNAp II), which may inhibit the formation of a transcription initiation complex. In Mus musculus (Mouse), this protein is Cyclin-C (Ccnc).